Consider the following 496-residue polypeptide: Probable CtpA-like serine protease (496 aa).

The segment covering 1 to 16 has biased composition (basic and acidic residues); the sequence is MDDKQHTTSSDDERAE. The interval 1–27 is disordered; the sequence is MDDKQHTTSSDDERAENATSNQDQQTN. Positions 17–27 are enriched in polar residues; it reads NATSNQDQQTN. Residues 39–59 traverse the membrane as a helical segment; it reads FISILIGTIIITAVITVVAYI. The region spanning 124–206 is the PDZ domain; sequence TKSFNEGVSG…TEVTLTVQRG (83 aa). Residues S329, D340, and K354 each act as charge relay system in the active site.

This sequence belongs to the peptidase S41A family.

The protein resides in the cell membrane. The chain is Probable CtpA-like serine protease from Staphylococcus aureus (strain MRSA252).